Consider the following 301-residue polypeptide: 4-hydroxy-tetrahydrodipicolinate synthase (301 aa).

A pyruvate-binding site is contributed by Thr50. Tyr138 serves as the catalytic Proton donor/acceptor. Residue Lys167 is the Schiff-base intermediate with substrate of the active site. Ile209 contacts pyruvate.

This sequence belongs to the DapA family. As to quaternary structure, homotetramer; dimer of dimers.

Its subcellular location is the cytoplasm. It catalyses the reaction L-aspartate 4-semialdehyde + pyruvate = (2S,4S)-4-hydroxy-2,3,4,5-tetrahydrodipicolinate + H2O + H(+). Its pathway is amino-acid biosynthesis; L-lysine biosynthesis via DAP pathway; (S)-tetrahydrodipicolinate from L-aspartate: step 3/4. Catalyzes the condensation of (S)-aspartate-beta-semialdehyde [(S)-ASA] and pyruvate to 4-hydroxy-tetrahydrodipicolinate (HTPA). This chain is 4-hydroxy-tetrahydrodipicolinate synthase, found in Sorangium cellulosum (strain So ce56) (Polyangium cellulosum (strain So ce56)).